Consider the following 344-residue polypeptide: tRNA N6-adenosine threonylcarbamoyltransferase (344 aa).

Positions 111 and 115 each coordinate Fe cation. Substrate is bound by residues 134 to 138 (LVSGG), aspartate 167, glycine 180, and asparagine 274. Aspartate 302 provides a ligand contact to Fe cation.

It belongs to the KAE1 / TsaD family. The cofactor is Fe(2+).

The protein localises to the cytoplasm. It carries out the reaction L-threonylcarbamoyladenylate + adenosine(37) in tRNA = N(6)-L-threonylcarbamoyladenosine(37) in tRNA + AMP + H(+). Its function is as follows. Required for the formation of a threonylcarbamoyl group on adenosine at position 37 (t(6)A37) in tRNAs that read codons beginning with adenine. Is involved in the transfer of the threonylcarbamoyl moiety of threonylcarbamoyl-AMP (TC-AMP) to the N6 group of A37, together with TsaE and TsaB. TsaD likely plays a direct catalytic role in this reaction. This chain is tRNA N6-adenosine threonylcarbamoyltransferase, found in Dechloromonas aromatica (strain RCB).